The following is a 276-amino-acid chain: Large ribosomal subunit protein uL2 (276 aa).

The disordered stretch occupies residues 224-276; the sequence is VMNPVDHPHGGGEGKAPIGRKSPMTPWGKPTLGYKTRKKKNKSDKFIIRRRKK. The span at 258–276 shows a compositional bias: basic residues; it reads KTRKKKNKSDKFIIRRRKK.

This sequence belongs to the universal ribosomal protein uL2 family. As to quaternary structure, part of the 50S ribosomal subunit. Forms a bridge to the 30S subunit in the 70S ribosome.

Functionally, one of the primary rRNA binding proteins. Required for association of the 30S and 50S subunits to form the 70S ribosome, for tRNA binding and peptide bond formation. It has been suggested to have peptidyltransferase activity; this is somewhat controversial. Makes several contacts with the 16S rRNA in the 70S ribosome. This Geobacillus kaustophilus (strain HTA426) protein is Large ribosomal subunit protein uL2.